The sequence spans 430 residues: Serine hydroxymethyltransferase (430 aa).

Position 120–122 (120–122 (GHI)) interacts with (6S)-5,6,7,8-tetrahydrofolate. K226 carries the N6-(pyridoxal phosphate)lysine modification.

It belongs to the SHMT family. In terms of assembly, homodimer. Pyridoxal 5'-phosphate serves as cofactor.

The protein localises to the cytoplasm. It functions in the pathway amino-acid biosynthesis; glycine biosynthesis; glycine from L-serine: step 1/1. Functionally, catalyzes the reversible interconversion of serine and glycine with a modified folate serving as the one-carbon carrier. Also exhibits a pteridine-independent aldolase activity toward beta-hydroxyamino acids, producing glycine and aldehydes, via a retro-aldol mechanism. The sequence is that of Serine hydroxymethyltransferase from Pyrobaculum calidifontis (strain DSM 21063 / JCM 11548 / VA1).